Reading from the N-terminus, the 288-residue chain is 4-diphosphocytidyl-2-C-methyl-D-erythritol kinase (288 aa).

K11 is an active-site residue. 95 to 105 serves as a coordination point for ATP; sequence PVAAGMAGGSS. Residue D137 is part of the active site.

Belongs to the GHMP kinase family. IspE subfamily.

The enzyme catalyses 4-CDP-2-C-methyl-D-erythritol + ATP = 4-CDP-2-C-methyl-D-erythritol 2-phosphate + ADP + H(+). It participates in isoprenoid biosynthesis; isopentenyl diphosphate biosynthesis via DXP pathway; isopentenyl diphosphate from 1-deoxy-D-xylulose 5-phosphate: step 3/6. Functionally, catalyzes the phosphorylation of the position 2 hydroxy group of 4-diphosphocytidyl-2C-methyl-D-erythritol. This chain is 4-diphosphocytidyl-2-C-methyl-D-erythritol kinase, found in Lachnospira eligens (strain ATCC 27750 / DSM 3376 / VPI C15-48 / C15-B4) (Eubacterium eligens).